We begin with the raw amino-acid sequence, 457 residues long: Phosphoglucosamine mutase (457 aa).

Ser-103 (phosphoserine intermediate) is an active-site residue. Mg(2+) contacts are provided by Ser-103, Asp-244, Asp-246, and Asp-248. Ser-103 carries the phosphoserine modification.

It belongs to the phosphohexose mutase family. It depends on Mg(2+) as a cofactor. In terms of processing, activated by phosphorylation.

It carries out the reaction alpha-D-glucosamine 1-phosphate = D-glucosamine 6-phosphate. Functionally, catalyzes the conversion of glucosamine-6-phosphate to glucosamine-1-phosphate. This Granulibacter bethesdensis (strain ATCC BAA-1260 / CGDNIH1) protein is Phosphoglucosamine mutase.